A 371-amino-acid polypeptide reads, in one-letter code: Otolith matrix protein 1 (371 aa).

The first 21 residues, 1–21, serve as a signal peptide directing secretion; sequence MDLPGGHLAVVLFLFVLVSMS. Residues 27 to 367 form the Transferrin-like domain; that stretch reads IRWCTVSDAE…YTTILRAFEC (341 aa).

As to quaternary structure, interacts with OTOL1.

It localises to the secreted. In terms of biological role, required for normal otolith growth and deposition of otolin-1 in the otolith. The polypeptide is Otolith matrix protein 1 (otomp) (Danio rerio (Zebrafish)).